Consider the following 202-residue polypeptide: Na(+)-translocating NADH-quinone reductase subunit E (202 aa).

Helical transmembrane passes span S11–I31, V35–A55, F81–L101, G114–V134, V144–I164, and L180–I200.

The protein belongs to the NqrDE/RnfAE family. Composed of six subunits; NqrA, NqrB, NqrC, NqrD, NqrE and NqrF.

The protein localises to the cell inner membrane. It catalyses the reaction a ubiquinone + n Na(+)(in) + NADH + H(+) = a ubiquinol + n Na(+)(out) + NAD(+). In terms of biological role, NQR complex catalyzes the reduction of ubiquinone-1 to ubiquinol by two successive reactions, coupled with the transport of Na(+) ions from the cytoplasm to the periplasm. NqrA to NqrE are probably involved in the second step, the conversion of ubisemiquinone to ubiquinol. The polypeptide is Na(+)-translocating NADH-quinone reductase subunit E (Azotobacter vinelandii (strain DJ / ATCC BAA-1303)).